The primary structure comprises 545 residues: Glucose-6-phosphate isomerase (545 aa).

The active-site Proton donor is the E349. Active-site residues include H380 and K509.

It belongs to the GPI family.

The protein resides in the cytoplasm. It carries out the reaction alpha-D-glucose 6-phosphate = beta-D-fructose 6-phosphate. It participates in carbohydrate biosynthesis; gluconeogenesis. The protein operates within carbohydrate degradation; glycolysis; D-glyceraldehyde 3-phosphate and glycerone phosphate from D-glucose: step 2/4. Its function is as follows. Catalyzes the reversible isomerization of glucose-6-phosphate to fructose-6-phosphate. The polypeptide is Glucose-6-phosphate isomerase (Chelativorans sp. (strain BNC1)).